A 232-amino-acid chain; its full sequence is Large ribosomal subunit protein uL1 (232 aa).

The protein belongs to the universal ribosomal protein uL1 family. In terms of assembly, part of the 50S ribosomal subunit.

Functionally, binds directly to 23S rRNA. The L1 stalk is quite mobile in the ribosome, and is involved in E site tRNA release. Protein L1 is also a translational repressor protein, it controls the translation of the L11 operon by binding to its mRNA. This is Large ribosomal subunit protein uL1 from Roseobacter denitrificans (strain ATCC 33942 / OCh 114) (Erythrobacter sp. (strain OCh 114)).